We begin with the raw amino-acid sequence, 456 residues long: uncharacterized protein (456 aa).

Belongs to the herpesviridae UL49 family.

This is an uncharacterized protein from Equus caballus (Horse).